The chain runs to 682 residues: MCGIFAYMNYRVPRTRKEIFETLIKGLQRLEYRGYDSAGVAIDGNNNEVKERHIQLVKKRGNVKALDEELYKQDSMDLKVEFETHFGIAHTRWATHGVPSAVNSHPQRSDKGNEFVVIHNGIITNYKDLRKFLESKGYEFESETDTETIAKLIKYVFDNRETEDITFSTLVERVIQQLEGAFALVFKSIHYPGEAVATRRGSPLLIGVRSKYKLSTEQIPVLYRTRNIENVKNICKTRMKRLDSSTCLHAVGNKAVEFFFASDASAIIEHTNRVIFLEDDDIAAVADGKLSIHRVKRLASDDPSRAIQTLQMELQQIMKGNFSAFMQKEIFEQPESVFNTMRGRVNFETNTVLLGGLKDHLKEIRRCRRLIVIGCGTSYHAAVATRQVLEELTELPVMVELASDFLDRNTPVFRDDVCFFISQSGETADTLLALRYCKDRRALTVGVTNTVGSSISRETDCGVHINAGPEIGVASTKAYTSQFISLVMFGLMMSEDRISLQNRRREIIHGLKSLPELIKEVLSLDEKIHDLALELYTQRSLLVMGRGYNYATCLEGALKIKEITYMHSEGILAGELKHGPLALIDKQMPVIMVIMKDPCFAKCQNALQQVTARQGRPIILCSKDDTESSKFAYKTIELPHTVDCLQGILSVIPLQLLSFHLAVLRGYDVDFPRNLAKSVTVE.

C2 acts as the For GATase activity in catalysis. Residues 2 to 288 (CGIFAYMNYR…DDDIAAVADG (287 aa)) enclose the Glutamine amidotransferase type-2 domain. At S244 the chain carries Phosphoserine. 2 consecutive SIS domains span residues 360 to 499 (HLKE…DRIS) and 531 to 672 (LALE…VDFP). Residues 377–378 (TS), 422–424 (SQS), T427, and H578 contribute to the substrate site.

It catalyses the reaction D-fructose 6-phosphate + L-glutamine = D-glucosamine 6-phosphate + L-glutamate. The protein operates within nucleotide-sugar biosynthesis; UDP-N-acetyl-alpha-D-glucosamine biosynthesis; alpha-D-glucosamine 6-phosphate from D-fructose 6-phosphate: step 1/1. Functionally, controls the flux of glucose into the hexosamine pathway. Most likely involved in regulating the availability of precursors for N- and O-linked glycosylation of proteins. In Bos taurus (Bovine), this protein is Glutamine--fructose-6-phosphate aminotransferase [isomerizing] 2 (GFPT2).